A 283-amino-acid polypeptide reads, in one-letter code: Protein FAM78A (283 aa).

The protein belongs to the FAM78 family.

This Mus musculus (Mouse) protein is Protein FAM78A (Fam78a).